The following is a 498-amino-acid chain: ATP synthase subunit beta, chloroplastic (498 aa).

Residue 172–179 coordinates ATP; the sequence is GGAGVGKT.

The protein belongs to the ATPase alpha/beta chains family. In terms of assembly, F-type ATPases have 2 components, CF(1) - the catalytic core - and CF(0) - the membrane proton channel. CF(1) has five subunits: alpha(3), beta(3), gamma(1), delta(1), epsilon(1). CF(0) has four main subunits: a(1), b(1), b'(1) and c(9-12).

Its subcellular location is the plastid. It localises to the chloroplast thylakoid membrane. It carries out the reaction ATP + H2O + 4 H(+)(in) = ADP + phosphate + 5 H(+)(out). Functionally, produces ATP from ADP in the presence of a proton gradient across the membrane. The catalytic sites are hosted primarily by the beta subunits. The chain is ATP synthase subunit beta, chloroplastic from Aristolochia macrophylla (Dutchman's pipe vine).